Here is a 310-residue protein sequence, read N- to C-terminus: MTAKIFIDGEHGTTGLQIRARLGERRDIELLSIPVERRKDPAARAEFLNAADIAILCLPDDAARESVSLIANDTTRVIDASTAYRVSEGWAYGFPEMDKSQSKAIAQAKRVANPGCWPQGPIALLRPLVSAGLLPADFPVTINGITGYSGGGRSMIEDYEGKGEDAPEFFPYGLTLSHKHLPELRTYAKLARDPLMQPVVGNFAQGMITMVPLQLGHLPRVPKGEELHAAIADHYAGIEGSAVEVAPFQAIERSPEIEPERYNDTNTMRLYVFANDARAQALLLAVYDNLGKGASGAAVQNLDLMLSGLR.

Residue C116 is part of the active site.

It belongs to the NAGSA dehydrogenase family. Type 2 subfamily.

Its subcellular location is the cytoplasm. It catalyses the reaction N-acetyl-L-glutamate 5-semialdehyde + phosphate + NADP(+) = N-acetyl-L-glutamyl 5-phosphate + NADPH + H(+). It participates in amino-acid biosynthesis; L-arginine biosynthesis; N(2)-acetyl-L-ornithine from L-glutamate: step 3/4. In terms of biological role, catalyzes the NADPH-dependent reduction of N-acetyl-5-glutamyl phosphate to yield N-acetyl-L-glutamate 5-semialdehyde. The protein is N-acetyl-gamma-glutamyl-phosphate reductase of Chelativorans sp. (strain BNC1).